The sequence spans 914 residues: MAIEEKQSRFRISDIAKELQVSPREVLQFVKQAGGKVASTSSMVGEDMRDMIFGNFSQEKKRVDEARKIRAEKQKRLTRLEEQSRKAYEKEQQLKESLSIAPLPAPVLHAPEVKIEIPPETATTPVAAEPPAILPVVSTPQPEPVADLPLVTEPVVAEPVAEAEPVVEAPVAETAGPEVMTPLVQTLPESMQAYEAPQKIGGLTVLGTIDVISEAERKKKSRKKSFRESAVELKGEFENVLSVDSEDGEAAKKKAAKPDGGEDVGVKKKKGKKKKKVEIDDKVISKNIKSTISGMDDSGLSGSRQKFRKQRRMEREREFEEAEAMREAEKTLIRVTEYASPHELAELMGLTAKEIIQKCFSMGKFVTINQRLDKETIELIGLEFGFEVEFISEIEATTTEELVDNAEDLQTRPPVVTIMGHVDHGKTSLLDYIRRSNVVAGESGGITQHIGAYEVSLDDGRHITFLDTPGHEAFTAMRARGAQVTDIVILVVAADDSVMPQTIEAINHAKAAGVPIVVAINKIDKPEANVEKIKAQLSEAGVLVEDWGGESQCQEISAKKGIGISELLEKVLAEAEIRELKGNYSRDILASGVIVESELDKGKGVVSTVLVQRGFLKVGDPFVAGNSMGKVRALMDERGKRIHEAGPSTPVRVLGFEDMPQSGDVLTVMASDRDARDLAQKRQIIKREHEFRRSTRVKLDSIARQIKEGLKKELSVIIKADTDGSIQALADGLMKIHNEEVKVQIIHQGVGQITETDVLLAAASDAIIIGFRVRPNVNAKRLAEKEDLDVRFYSVIYHVLEDVEKALEGMLSPELHEESLGSLEIRQVFRVPKVGNVGGAYVLEGKVSRDAKVRLLRDGVQIFEGQLDSLKRFKDDVKEVDAGYECGVSLKGYDDIKVGDVIEAYKIVEKKRKL.

Disordered regions lie at residues 246 to 271 and 293 to 313; these read EDGE…KKKG and SGMD…QRRM. Over residues 249–266 the composition is skewed to basic and acidic residues; that stretch reads EAAKKKAAKPDGGEDVGV. Residues 411-581 form the tr-type G domain; it reads TRPPVVTIMG…LAEAEIRELK (171 aa). Positions 420 to 427 are G1; sequence GHVDHGKT. 420 to 427 contributes to the GTP binding site; sequence GHVDHGKT. The tract at residues 445–449 is G2; that stretch reads GITQH. A G3 region spans residues 467–470; it reads DTPG. GTP contacts are provided by residues 467-471 and 521-524; these read DTPGH and NKID. Residues 521–524 form a G4 region; sequence NKID. A G5 region spans residues 557-559; sequence SAK.

Belongs to the TRAFAC class translation factor GTPase superfamily. Classic translation factor GTPase family. IF-2 subfamily.

It localises to the cytoplasm. One of the essential components for the initiation of protein synthesis. Protects formylmethionyl-tRNA from spontaneous hydrolysis and promotes its binding to the 30S ribosomal subunits. Also involved in the hydrolysis of GTP during the formation of the 70S ribosomal complex. This is Translation initiation factor IF-2 from Chlorobaculum tepidum (strain ATCC 49652 / DSM 12025 / NBRC 103806 / TLS) (Chlorobium tepidum).